A 514-amino-acid polypeptide reads, in one-letter code: 2,3-bisphosphoglycerate-independent phosphoglycerate mutase (514 aa).

Residues aspartate 14 and serine 64 each contribute to the Mn(2+) site. Residue serine 64 is the Phosphoserine intermediate of the active site. Residues histidine 125, 155–156, arginine 187, arginine 193, 263–266, and lysine 336 contribute to the substrate site; these read RD and RADR. Mn(2+)-binding residues include aspartate 403, histidine 407, aspartate 444, histidine 445, and histidine 463.

The protein belongs to the BPG-independent phosphoglycerate mutase family. As to quaternary structure, monomer. Requires Mn(2+) as cofactor.

The enzyme catalyses (2R)-2-phosphoglycerate = (2R)-3-phosphoglycerate. It participates in carbohydrate degradation; glycolysis; pyruvate from D-glyceraldehyde 3-phosphate: step 3/5. Functionally, catalyzes the interconversion of 2-phosphoglycerate and 3-phosphoglycerate. The protein is 2,3-bisphosphoglycerate-independent phosphoglycerate mutase of Shewanella putrefaciens (strain CN-32 / ATCC BAA-453).